The following is a 106-amino-acid chain: Neisseria hypothetical transcription factor (106 aa).

One can recognise an HTH cro/C1-type domain in the interval 26–80; that stretch reads MRLFRVNKGWSQEELARQCGLDRTYVSAVERKRWNIALSNIEKMAAALGVAAYQL. The H-T-H motif DNA-binding region spans 37 to 56; sequence QEELARQCGLDRTYVSAVER.

As to quaternary structure, homodimer. Can interact with the dimeric form of the DNA mimic protein DMP19 with 1:1 stoichiometry.

It localises to the cytoplasm. With respect to regulation, repressor activity is inhibited in the presence of the DNA mimic protein DMP19, which interacts with NHTF and prevents binding of NHTF to its DNA-binding sites. In terms of biological role, transcriptional regulator probably involved in the response to nitrogen levels. Down-regulates its own expression as well as the expression of the downstream gene, glnD, which encodes the [Protein-PII] uridylyltransferase, a key enzyme in the nitrogen regulation system. Acts by binding to a specific palindromic DNA sequence (5'-TGTNANTNACA-3') in its 5'-untranslated region. In Neisseria meningitidis serogroup B (strain ATCC BAA-335 / MC58), this protein is Neisseria hypothetical transcription factor.